Here is a 537-residue protein sequence, read N- to C-terminus: CTP synthase (537 aa).

The tract at residues 1 to 267 (MTKYIFVTGG…DQIVLDHFDV (267 aa)) is amidoligase domain. S13 lines the CTP pocket. S13 contacts UTP. An ATP-binding site is contributed by 14 to 19 (SIGKGI). Y54 is an L-glutamine binding site. D71 lines the ATP pocket. Mg(2+) is bound by residues D71 and E141. CTP contacts are provided by residues 148-150 (DIE), 188-193 (KTKPTQ), and K224. Residues 188–193 (KTKPTQ) and K224 contribute to the UTP site. In terms of domain architecture, Glutamine amidotransferase type-1 spans 292–535 (KIALVGKYVA…IDAANQTGKV (244 aa)). G354 is a binding site for L-glutamine. Residue C381 is the Nucleophile; for glutamine hydrolysis of the active site. L-glutamine-binding positions include 382–385 (LGMQ), E405, and R463. Active-site residues include H508 and E510.

The protein belongs to the CTP synthase family. In terms of assembly, homotetramer.

It carries out the reaction UTP + L-glutamine + ATP + H2O = CTP + L-glutamate + ADP + phosphate + 2 H(+). The enzyme catalyses L-glutamine + H2O = L-glutamate + NH4(+). The catalysed reaction is UTP + NH4(+) + ATP = CTP + ADP + phosphate + 2 H(+). The protein operates within pyrimidine metabolism; CTP biosynthesis via de novo pathway; CTP from UDP: step 2/2. With respect to regulation, allosterically activated by GTP, when glutamine is the substrate; GTP has no effect on the reaction when ammonia is the substrate. The allosteric effector GTP functions by stabilizing the protein conformation that binds the tetrahedral intermediate(s) formed during glutamine hydrolysis. Inhibited by the product CTP, via allosteric rather than competitive inhibition. In terms of biological role, catalyzes the ATP-dependent amination of UTP to CTP with either L-glutamine or ammonia as the source of nitrogen. Regulates intracellular CTP levels through interactions with the four ribonucleotide triphosphates. This Lactiplantibacillus plantarum (strain ATCC BAA-793 / NCIMB 8826 / WCFS1) (Lactobacillus plantarum) protein is CTP synthase.